The following is a 336-amino-acid chain: Dihydroorotate dehydrogenase (quinone) (336 aa).

FMN-binding positions include alanine 62 to lysine 66 and threonine 86. Lysine 66 is a substrate binding site. Asparagine 111–phenylalanine 115 is a substrate binding site. FMN contacts are provided by asparagine 139 and asparagine 172. A substrate-binding site is contributed by asparagine 172. The active-site Nucleophile is serine 175. Residue asparagine 177 participates in substrate binding. Lysine 217 and threonine 245 together coordinate FMN. Residue asparagine 246 to threonine 247 participates in substrate binding. FMN is bound by residues glycine 268, glycine 297, and tyrosine 318–serine 319.

It belongs to the dihydroorotate dehydrogenase family. Type 2 subfamily. In terms of assembly, monomer. It depends on FMN as a cofactor.

Its subcellular location is the cell membrane. The enzyme catalyses (S)-dihydroorotate + a quinone = orotate + a quinol. The protein operates within pyrimidine metabolism; UMP biosynthesis via de novo pathway; orotate from (S)-dihydroorotate (quinone route): step 1/1. In terms of biological role, catalyzes the conversion of dihydroorotate to orotate with quinone as electron acceptor. This chain is Dihydroorotate dehydrogenase (quinone), found in Sodalis glossinidius (strain morsitans).